Here is a 371-residue protein sequence, read N- to C-terminus: 4-hydroxy-3-methylbut-2-en-1-yl diphosphate synthase (flavodoxin) (371 aa).

[4Fe-4S] cluster is bound by residues C269, C272, C304, and E311.

The protein belongs to the IspG family. [4Fe-4S] cluster is required as a cofactor.

It carries out the reaction (2E)-4-hydroxy-3-methylbut-2-enyl diphosphate + oxidized [flavodoxin] + H2O + 2 H(+) = 2-C-methyl-D-erythritol 2,4-cyclic diphosphate + reduced [flavodoxin]. It functions in the pathway isoprenoid biosynthesis; isopentenyl diphosphate biosynthesis via DXP pathway; isopentenyl diphosphate from 1-deoxy-D-xylulose 5-phosphate: step 5/6. Functionally, converts 2C-methyl-D-erythritol 2,4-cyclodiphosphate (ME-2,4cPP) into 1-hydroxy-2-methyl-2-(E)-butenyl 4-diphosphate. This Acinetobacter baumannii (strain AB307-0294) protein is 4-hydroxy-3-methylbut-2-en-1-yl diphosphate synthase (flavodoxin).